The chain runs to 184 residues: Peptide deformylase (184 aa).

Fe cation-binding residues include Cys-98 and His-140. Glu-141 is an active-site residue. His-144 is a binding site for Fe cation.

Belongs to the polypeptide deformylase family. It depends on Fe(2+) as a cofactor.

It carries out the reaction N-terminal N-formyl-L-methionyl-[peptide] + H2O = N-terminal L-methionyl-[peptide] + formate. Its function is as follows. Removes the formyl group from the N-terminal Met of newly synthesized proteins. Requires at least a dipeptide for an efficient rate of reaction. N-terminal L-methionine is a prerequisite for activity but the enzyme has broad specificity at other positions. The protein is Peptide deformylase of Bacteroides thetaiotaomicron (strain ATCC 29148 / DSM 2079 / JCM 5827 / CCUG 10774 / NCTC 10582 / VPI-5482 / E50).